The sequence spans 327 residues: S-adenosylmethionine/S-adenosylhomocysteine transporter (327 aa).

10 consecutive transmembrane segments (helical) span residues 22–42 (CDMAIFLIFLNAFIWSSSFAL), 53–73 (LFVTGSRMVLAGVVLFGLLLC), 85–105 (IMPIVLLSVIGFYLTNVLEFI), 114–134 (TACFIYGFSPFTAAFCSYVQL), 143–163 (LGGLSLGLVSYLVYLLFGGSE), 165–185 (VAEWGWQLGLPELLLIAATCL), 202–222 (SLSMTAINAYAMVIAGVLSLI), 240–260 (LFLQAIGALVIFSNLICYNLF), 271–291 (FLSFCNLVMPLFASFFGWLLL), and 294–314 (SFPPGLLFAVGFMVLGCRLIY). Residues 34–157 (FIWSSSFALS…LGLVSYLVYL (124 aa)) enclose the EamA 1 domain. Residues 189–313 (GWTLLRKLGR…GFMVLGCRLI (125 aa)) enclose the EamA 2 domain.

The protein belongs to the drug/metabolite transporter (DMT) superfamily. 10 TMS drug/metabolite exporter (DME) (TC 2.A.7.3) family.

It localises to the cell membrane. In terms of biological role, transports S-adenosylmethionine (SAM) and S-adenosylhomocysteine (SAH). Allows bacteria to acquire SAM from the eukaryotic host cell and to likely remove the toxic by-product SAH. The protein is S-adenosylmethionine/S-adenosylhomocysteine transporter of Chlamydia trachomatis serovar D (strain ATCC VR-885 / DSM 19411 / UW-3/Cx).